Consider the following 610-residue polypeptide: Dihydroxy-acid dehydratase (610 aa).

Asp-81 is a Mg(2+) binding site. Cys-122 lines the [2Fe-2S] cluster pocket. Residues Asp-123 and Lys-124 each coordinate Mg(2+). At Lys-124 the chain carries N6-carboxylysine. A [2Fe-2S] cluster-binding site is contributed by Cys-193. Glu-489 is a binding site for Mg(2+). Ser-515 serves as the catalytic Proton acceptor.

This sequence belongs to the IlvD/Edd family. In terms of assembly, homodimer. The cofactor is [2Fe-2S] cluster. Mg(2+) is required as a cofactor.

It carries out the reaction (2R)-2,3-dihydroxy-3-methylbutanoate = 3-methyl-2-oxobutanoate + H2O. It catalyses the reaction (2R,3R)-2,3-dihydroxy-3-methylpentanoate = (S)-3-methyl-2-oxopentanoate + H2O. It functions in the pathway amino-acid biosynthesis; L-isoleucine biosynthesis; L-isoleucine from 2-oxobutanoate: step 3/4. The protein operates within amino-acid biosynthesis; L-valine biosynthesis; L-valine from pyruvate: step 3/4. Functionally, functions in the biosynthesis of branched-chain amino acids. Catalyzes the dehydration of (2R,3R)-2,3-dihydroxy-3-methylpentanoate (2,3-dihydroxy-3-methylvalerate) into 2-oxo-3-methylpentanoate (2-oxo-3-methylvalerate) and of (2R)-2,3-dihydroxy-3-methylbutanoate (2,3-dihydroxyisovalerate) into 2-oxo-3-methylbutanoate (2-oxoisovalerate), the penultimate precursor to L-isoleucine and L-valine, respectively. The sequence is that of Dihydroxy-acid dehydratase from Xylella fastidiosa (strain 9a5c).